The sequence spans 249 residues: Sugar fermentation stimulation protein homolog (249 aa).

It belongs to the SfsA family.

The chain is Sugar fermentation stimulation protein homolog from Synechococcus sp. (strain CC9902).